Here is a 408-residue protein sequence, read N- to C-terminus: Serine/threonine transporter SstT (408 aa).

A run of 9 helical transmembrane segments spans residues Leu-11–Ala-31, Phe-43–Leu-63, Ile-82–Met-102, Ala-141–Leu-161, Ile-192–Gly-212, Leu-216–Val-236, Met-298–Ile-318, Ala-339–Ile-359, and Val-363–Thr-383.

The protein belongs to the dicarboxylate/amino acid:cation symporter (DAACS) (TC 2.A.23) family.

It localises to the cell inner membrane. It carries out the reaction L-serine(in) + Na(+)(in) = L-serine(out) + Na(+)(out). The enzyme catalyses L-threonine(in) + Na(+)(in) = L-threonine(out) + Na(+)(out). Functionally, involved in the import of serine and threonine into the cell, with the concomitant import of sodium (symport system). This Shewanella sp. (strain MR-7) protein is Serine/threonine transporter SstT.